Consider the following 261-residue polypeptide: Glandular kallikrein-7, submandibular/renal (261 aa).

The first 18 residues, 1-18 (MWFLILFLDLSLGQIDAA), serve as a signal peptide directing secretion. Positions 19 to 24 (PPGQSR) are cleaved as a propeptide — activation peptide. The 234-residue stretch at 25-258 (VIGGYKCEKN…FTSWIKEVMK (234 aa)) folds into the Peptidase S1 domain. Cystine bridges form between Cys-31/Cys-173, Cys-50/Cys-66, Cys-152/Cys-219, Cys-184/Cys-198, and Cys-209/Cys-234. Catalysis depends on His-65, which acts as the Charge relay system. Asn-108 carries an N-linked (GlcNAc...) asparagine glycan. Asp-120 serves as the catalytic Charge relay system. Ser-213 acts as the Charge relay system in catalysis.

It belongs to the peptidase S1 family. Kallikrein subfamily. As to expression, kidney and submandibular gland. Not expressed in liver, pancreas, spleen, parotid, testis, cortex, prostate, ovary and pituitary.

The enzyme catalyses Preferential cleavage of Arg-|-Xaa bonds in small molecule substrates. Highly selective action to release kallidin (lysyl-bradykinin) from kininogen involves hydrolysis of Met-|-Xaa or Leu-|-Xaa.. Functionally, glandular kallikreins cleave Met-Lys and Arg-Ser bonds in kininogen to release Lys-bradykinin. Predominant kallikrein protein in the kidney. In Rattus norvegicus (Rat), this protein is Glandular kallikrein-7, submandibular/renal (Klk7).